Consider the following 119-residue polypeptide: Acidic phospholipase A2 CM-II (119 aa).

Intrachain disulfides connect Cys-11/Cys-71, Cys-26/Cys-118, Cys-28/Cys-44, Cys-43/Cys-99, Cys-50/Cys-92, Cys-60/Cys-85, and Cys-78/Cys-90. Residues Phe-27, Gly-29, and Gly-31 each contribute to the Ca(2+) site. His-47 is a catalytic residue. Asp-48 serves as a coordination point for Ca(2+). Residue Asp-93 is part of the active site.

This sequence belongs to the phospholipase A2 family. Group I subfamily. D49 sub-subfamily. The cofactor is Ca(2+). In terms of tissue distribution, expressed by the venom gland.

It localises to the secreted. The catalysed reaction is a 1,2-diacyl-sn-glycero-3-phosphocholine + H2O = a 1-acyl-sn-glycero-3-phosphocholine + a fatty acid + H(+). In terms of biological role, PLA2 catalyzes the calcium-dependent hydrolysis of the 2-acyl groups in 3-sn-phosphoglycerides. In Aspidelaps scutatus (Shield-nose snake), this protein is Acidic phospholipase A2 CM-II.